We begin with the raw amino-acid sequence, 973 residues long: Valine--tRNA ligase (973 aa).

The short motif at proline 57–histidine 67 is the 'HIGH' region element. Positions lysine 569 to serine 573 match the 'KMSKS' region motif. Lysine 572 provides a ligand contact to ATP. The stretch at methionine 901–isoleucine 970 forms a coiled coil.

The protein belongs to the class-I aminoacyl-tRNA synthetase family. ValS type 1 subfamily. Monomer.

It localises to the cytoplasm. It catalyses the reaction tRNA(Val) + L-valine + ATP = L-valyl-tRNA(Val) + AMP + diphosphate. In terms of biological role, catalyzes the attachment of valine to tRNA(Val). As ValRS can inadvertently accommodate and process structurally similar amino acids such as threonine, to avoid such errors, it has a 'posttransfer' editing activity that hydrolyzes mischarged Thr-tRNA(Val) in a tRNA-dependent manner. This chain is Valine--tRNA ligase, found in Colwellia psychrerythraea (strain 34H / ATCC BAA-681) (Vibrio psychroerythus).